We begin with the raw amino-acid sequence, 515 residues long: Glucose-6-phosphate 1-dehydrogenase (515 aa).

Residue Ala-2 is modified to N-acetylalanine. The residue at position 8 (Ser-8) is a Phosphoserine. Residue Thr-10 is modified to Phosphothreonine. Phe-26 is subject to Phosphoserine. NADP(+) contacts are provided by residues 38-45 (GASGDLAK) and Arg-72. Position 89 is an N6-acetyllysine (Lys-89). NADP(+) is bound by residues Tyr-147 and Lys-171. Residues Lys-171, 201 to 205 (HYLGK), Glu-239, and Asp-258 each bind D-glucose 6-phosphate. Residue Lys-171 is modified to N6-(2-hydroxyisobutyryl)lysine; alternate. Lys-171 is modified (N6-acetyllysine; alternate). The Proton acceptor role is filled by His-263. Residue Arg-357 coordinates NADP(+). Residues Lys-360 and Arg-365 each contribute to the D-glucose 6-phosphate site. NADP(+) contacts are provided by Lys-366, Arg-370, and Arg-393. Residue Gln-395 coordinates D-glucose 6-phosphate. Residues 401–403 (YTK) and 421–423 (DLT) each bind NADP(+). Position 403 is an N6-acetyllysine (Lys-403). Residue Lys-432 is modified to N6-acetyllysine. Residue Arg-487 participates in NADP(+) binding. Lys-497 bears the N6-acetyllysine mark. Tyr-503 and Trp-509 together coordinate NADP(+). Tyr-503 carries the phosphotyrosine modification.

It belongs to the glucose-6-phosphate dehydrogenase family. As to quaternary structure, homotetramer; dimer of dimers. Interacts with SIRT2; the interaction is enhanced by H(2)O(2) treatment. Forms a ternary complex with ALDOB and TP53; this interaction is direct. ALDOB stabilizes the complex inhibiting G6PD activity and keeping oxidative pentose phosphate metabolism in check. Acetylated by ELP3 at Lys-403; acetylation inhibits its homodimerization and enzyme activity. Deacetylated by SIRT2 at Lys-403; deacetylation stimulates its enzyme activity. In terms of tissue distribution, isoform Long is found in lymphoblasts, granulocytes and sperm.

The protein resides in the cytoplasm. Its subcellular location is the cytosol. It localises to the membrane. The catalysed reaction is D-glucose 6-phosphate + NADP(+) = 6-phospho-D-glucono-1,5-lactone + NADPH + H(+). It functions in the pathway carbohydrate degradation; pentose phosphate pathway; D-ribulose 5-phosphate from D-glucose 6-phosphate (oxidative stage): step 1/3. Its function is as follows. Catalyzes the rate-limiting step of the oxidative pentose-phosphate pathway, which represents a route for the dissimilation of carbohydrates besides glycolysis. The main function of this enzyme is to provide reducing power (NADPH) and pentose phosphates for fatty acid and nucleic acid synthesis. In Homo sapiens (Human), this protein is Glucose-6-phosphate 1-dehydrogenase (G6PD).